We begin with the raw amino-acid sequence, 864 residues long: uncharacterized protein (864 aa).

This is an uncharacterized protein from Rickettsia typhi (strain ATCC VR-144 / Wilmington).